A 328-amino-acid chain; its full sequence is Phosphatidylglycerol--prolipoprotein diacylglyceryl transferase (328 aa).

3 helical membrane passes run 15–35 (VIQGIPITWYSLSYILIILIS), 57–77 (IFMFSLVLGAILGGRLASTLV), and 106–126 (GMAIHGGFLGAIIAPLITINT). Arginine 156 is an a 1,2-diacyl-sn-glycero-3-phospho-(1'-sn-glycerol) binding site. Transmembrane regions (helical) follow at residues 242–262 (GFIFGVYVMLYAFFRFFIEYL) and 289–309 (ISMGQILSLTLMLSGLIWIIV).

This sequence belongs to the Lgt family.

The protein localises to the cell inner membrane. It catalyses the reaction L-cysteinyl-[prolipoprotein] + a 1,2-diacyl-sn-glycero-3-phospho-(1'-sn-glycerol) = an S-1,2-diacyl-sn-glyceryl-L-cysteinyl-[prolipoprotein] + sn-glycerol 1-phosphate + H(+). It functions in the pathway protein modification; lipoprotein biosynthesis (diacylglyceryl transfer). Its function is as follows. Catalyzes the transfer of the diacylglyceryl group from phosphatidylglycerol to the sulfhydryl group of the N-terminal cysteine of a prolipoprotein, the first step in the formation of mature lipoproteins. This chain is Phosphatidylglycerol--prolipoprotein diacylglyceryl transferase, found in Borreliella burgdorferi (strain ATCC 35210 / DSM 4680 / CIP 102532 / B31) (Borrelia burgdorferi).